The chain runs to 740 residues: Rho GTPase-activating protein 92B (740 aa).

Residues 13 to 246 form the BAR domain; it reads ENLSRSSKSD…IQDTIQGTEK (234 aa). A disordered region spans residues 49 to 74; the sequence is LPALSGGGGSGSGSSEEQDKRTKKNS. Residues 251-448 enclose the Rho-GAP domain; that stretch reads TSLKEHLTST…LLISQWDYFF (198 aa). The disordered stretch occupies residues 467 to 740; it reads GKSKSNSSNE…PPPTNWKSSD (274 aa). Residues S469 and S473 each carry the phosphoserine modification. Residues 506 to 520 are compositionally biased toward polar residues; the sequence is TTNGNGIIMTTSQTS. A compositionally biased stretch (pro residues) spans 566 to 577; sequence PLPPPPVTPAKP. S593 carries the phosphoserine modification. T595 bears the Phosphothreonine mark. Polar residues predominate over residues 643–655; the sequence is TTPTQATIDNGNG. Residues 659-672 are compositionally biased toward basic and acidic residues; sequence FKTEHFLDKLRQEN. A compositionally biased stretch (polar residues) spans 673–686; that stretch reads GETNGTREVSSTTK. Over residues 694-713 the composition is skewed to low complexity; sequence PPATAADQNQQQAQPQVTTP. Phosphoserine is present on S715. Residue T721 is modified to Phosphothreonine. The segment covering 725-734 has biased composition (pro residues); the sequence is PTVPAPPPPT. Phosphoserine is present on residues S738 and S739.

In terms of biological role, GTPase activator for the Rho-type GTPases by converting them to an inactive GDP-bound state. The chain is Rho GTPase-activating protein 92B (RhoGAP92B) from Drosophila melanogaster (Fruit fly).